The primary structure comprises 157 residues: N-acetylgalactosamine-specific phosphotransferase enzyme IIB component 2 (157 aa).

A PTS EIIB type-4 domain is found at 1 to 157 (MPNIVLSRID…EPAVDLFKLL (157 aa)). The active-site Pros-phosphohistidine intermediate is histidine 15.

The protein resides in the cytoplasm. In terms of biological role, the phosphoenolpyruvate-dependent sugar phosphotransferase system (sugar PTS), a major carbohydrate active -transport system, catalyzes the phosphorylation of incoming sugar substrates concomitantly with their translocation across the cell membrane. This system is involved in N-acetylgalactosamine transport. This chain is N-acetylgalactosamine-specific phosphotransferase enzyme IIB component 2 (agaV), found in Escherichia coli (strain K12).